A 136-amino-acid polypeptide reads, in one-letter code: Ribosome-binding factor A (136 aa).

Residues 116-136 are disordered; the sequence is AGNHKASDEEESDDKGHEDEQ.

The protein belongs to the RbfA family. Monomer. Binds 30S ribosomal subunits, but not 50S ribosomal subunits or 70S ribosomes.

The protein localises to the cytoplasm. In terms of biological role, one of several proteins that assist in the late maturation steps of the functional core of the 30S ribosomal subunit. Associates with free 30S ribosomal subunits (but not with 30S subunits that are part of 70S ribosomes or polysomes). Required for efficient processing of 16S rRNA. May interact with the 5'-terminal helix region of 16S rRNA. The protein is Ribosome-binding factor A of Lachnoclostridium phytofermentans (strain ATCC 700394 / DSM 18823 / ISDg) (Clostridium phytofermentans).